The chain runs to 484 residues: UDP-N-acetylmuramoyl-L-alanyl-D-glutamate--2,6-diaminopimelate ligase (484 aa).

Residue S29 participates in UDP-N-acetyl-alpha-D-muramoyl-L-alanyl-D-glutamate binding. 108–114 (GTSGKTS) lines the ATP pocket. UDP-N-acetyl-alpha-D-muramoyl-L-alanyl-D-glutamate contacts are provided by residues 150–151 (TT), S177, Q183, and R185. An N6-carboxylysine modification is found at K217. Meso-2,6-diaminopimelate contacts are provided by residues R381, 405–408 (DNPR), G453, and E457. A Meso-diaminopimelate recognition motif motif is present at residues 405–408 (DNPR).

It belongs to the MurCDEF family. MurE subfamily. Requires Mg(2+) as cofactor. Post-translationally, carboxylation is probably crucial for Mg(2+) binding and, consequently, for the gamma-phosphate positioning of ATP.

The protein resides in the cytoplasm. It catalyses the reaction UDP-N-acetyl-alpha-D-muramoyl-L-alanyl-D-glutamate + meso-2,6-diaminopimelate + ATP = UDP-N-acetyl-alpha-D-muramoyl-L-alanyl-gamma-D-glutamyl-meso-2,6-diaminopimelate + ADP + phosphate + H(+). It functions in the pathway cell wall biogenesis; peptidoglycan biosynthesis. Its function is as follows. Catalyzes the addition of meso-diaminopimelic acid to the nucleotide precursor UDP-N-acetylmuramoyl-L-alanyl-D-glutamate (UMAG) in the biosynthesis of bacterial cell-wall peptidoglycan. The sequence is that of UDP-N-acetylmuramoyl-L-alanyl-D-glutamate--2,6-diaminopimelate ligase from Mesorhizobium japonicum (strain LMG 29417 / CECT 9101 / MAFF 303099) (Mesorhizobium loti (strain MAFF 303099)).